The following is a 631-amino-acid chain: Phosphomethylpyrimidine synthase (631 aa).

Residues Asn-239, Met-268, Tyr-297, His-333, 353–355 (SRG), 394–397 (DGLR), and Glu-433 each bind substrate. Zn(2+) is bound at residue His-437. Residue Tyr-460 participates in substrate binding. His-501 lines the Zn(2+) pocket. [4Fe-4S] cluster is bound by residues Cys-581, Cys-584, and Cys-589.

The protein belongs to the ThiC family. As to quaternary structure, homodimer. [4Fe-4S] cluster serves as cofactor.

The catalysed reaction is 5-amino-1-(5-phospho-beta-D-ribosyl)imidazole + S-adenosyl-L-methionine = 4-amino-2-methyl-5-(phosphooxymethyl)pyrimidine + CO + 5'-deoxyadenosine + formate + L-methionine + 3 H(+). It participates in cofactor biosynthesis; thiamine diphosphate biosynthesis. Catalyzes the synthesis of the hydroxymethylpyrimidine phosphate (HMP-P) moiety of thiamine from aminoimidazole ribotide (AIR) in a radical S-adenosyl-L-methionine (SAM)-dependent reaction. In Escherichia coli (strain 55989 / EAEC), this protein is Phosphomethylpyrimidine synthase.